The primary structure comprises 887 residues: Integrator complex subunit 6 (887 aa).

In terms of domain architecture, VWFA spans 3–227 (ILLFLIDTSA…QCLESLVQKV (225 aa)). Positions 626–633 (MMIDEADE) match the Inhibitory loop motif. Phosphoserine is present on S804.

Belongs to the Integrator subunit 6 family. Component of the Integrator complex, composed of core subunits INTS1, INTS2, INTS3, INTS4, INTS5, INTS6, INTS7, INTS8, INTS9/RC74, INTS10, INTS11/CPSF3L, INTS12, INTS13, INTS14 and INTS15. The core complex associates with protein phosphatase 2A subunits PPP2CA and PPP2R1A, to form the Integrator-PP2A (INTAC) complex. Widely expressed. Expressed in heart, brain, placenta, lung, liver, skeletal muscle, kidney and pancreas.

It is found in the nucleus. The protein resides in the chromosome. Its function is as follows. Component of the integrator complex, a multiprotein complex that terminates RNA polymerase II (Pol II) transcription in the promoter-proximal region of genes. The integrator complex provides a quality checkpoint during transcription elongation by driving premature transcription termination of transcripts that are unfavorably configured for transcriptional elongation: the complex terminates transcription by (1) catalyzing dephosphorylation of the C-terminal domain (CTD) of Pol II subunit POLR2A and SUPT5H/SPT5, (2) degrading the exiting nascent RNA transcript via endonuclease activity and (3) promoting the release of Pol II from bound DNA. The integrator complex is also involved in terminating the synthesis of non-coding Pol II transcripts, such as enhancer RNAs (eRNAs), small nuclear RNAs (snRNAs), telomerase RNAs and long non-coding RNAs (lncRNAs). Within the integrator complex, INTS6 acts as a molecular adapter that promotes assembly of protein phosphatase 2A (PP2A) subunits to the integrator core complex, promoting recruitment of PP2A to transcription pause-release checkpoint. Mediates recruitment of cytoplasmic dynein to the nuclear envelope, probably as component of the integrator complex. May have a tumor suppressor role; an ectopic expression suppressing tumor cell growth. This Homo sapiens (Human) protein is Integrator complex subunit 6.